Reading from the N-terminus, the 320-residue chain is tRNA U34 carboxymethyltransferase (320 aa).

Carboxy-S-adenosyl-L-methionine contacts are provided by residues Lys-89, Trp-103, Lys-108, Gly-127, 177–178, Met-193, Tyr-197, and Arg-312; that span reads LE.

Belongs to the class I-like SAM-binding methyltransferase superfamily. CmoB family. Homotetramer.

It catalyses the reaction carboxy-S-adenosyl-L-methionine + 5-hydroxyuridine(34) in tRNA = 5-carboxymethoxyuridine(34) in tRNA + S-adenosyl-L-homocysteine + H(+). In terms of biological role, catalyzes carboxymethyl transfer from carboxy-S-adenosyl-L-methionine (Cx-SAM) to 5-hydroxyuridine (ho5U) to form 5-carboxymethoxyuridine (cmo5U) at position 34 in tRNAs. This is tRNA U34 carboxymethyltransferase from Stutzerimonas stutzeri (strain A1501) (Pseudomonas stutzeri).